We begin with the raw amino-acid sequence, 98 residues long: Co-chaperonin GroES (98 aa).

This sequence belongs to the GroES chaperonin family. Heptamer of 7 subunits arranged in a ring. Interacts with the chaperonin GroEL.

The protein resides in the cytoplasm. In terms of biological role, together with the chaperonin GroEL, plays an essential role in assisting protein folding. The GroEL-GroES system forms a nano-cage that allows encapsulation of the non-native substrate proteins and provides a physical environment optimized to promote and accelerate protein folding. GroES binds to the apical surface of the GroEL ring, thereby capping the opening of the GroEL channel. The polypeptide is Co-chaperonin GroES (Corynebacterium diphtheriae (strain ATCC 700971 / NCTC 13129 / Biotype gravis)).